The following is a 62-amino-acid chain: Large ribosomal subunit protein uL30 (62 aa).

It belongs to the universal ribosomal protein uL30 family. Part of the 50S ribosomal subunit.

The protein is Large ribosomal subunit protein uL30 of Thioalkalivibrio sulfidiphilus (strain HL-EbGR7).